The primary structure comprises 528 residues: Na(+)/H(+) antiporter NhaB (528 aa).

The next 10 membrane-spanning stretches (helical) occupy residues 20 to 39 (WFKIAIISFLVINPIVFYFN), 66 to 86 (PGGLLAIEAVAIGMTSPSQVL), 97 to 117 (LLLVFMVAGIYFMKQLLLFVF), 139 to 159 (AFLSAFLDALTVIAVIITVAV), 241 to 261 (IRMSPVTVPVFFAGITTCFLV), 304 to 324 (AVIGVWLIAGLALHLASVGLI), 349 to 369 (EEALPFTALLAVFFAIVAVII), 390 to 410 (LVIFYIANGLLSMVSDNVFVG), 448 to 468 (ATPNGQAAFLFLLTSAIAPLI), and 476 to 496 (VWMALPYTIVLSIVGVLAIQL).

Belongs to the NhaB Na(+)/H(+) (TC 2.A.34) antiporter family.

The protein resides in the cell inner membrane. It carries out the reaction 2 Na(+)(in) + 3 H(+)(out) = 2 Na(+)(out) + 3 H(+)(in). Na(+)/H(+) antiporter that extrudes sodium in exchange for external protons. This is Na(+)/H(+) antiporter NhaB from Shewanella pealeana (strain ATCC 700345 / ANG-SQ1).